We begin with the raw amino-acid sequence, 280 residues long: Sulfur carrier protein FdhD (280 aa).

Cys-121 serves as the catalytic Cysteine persulfide intermediate. Residue Phe-258–Arg-263 participates in Mo-bis(molybdopterin guanine dinucleotide) binding.

Belongs to the FdhD family.

The protein localises to the cytoplasm. Its function is as follows. Required for formate dehydrogenase (FDH) activity. Acts as a sulfur carrier protein that transfers sulfur from IscS to the molybdenum cofactor prior to its insertion into FDH. The protein is Sulfur carrier protein FdhD of Cronobacter sakazakii (strain ATCC BAA-894) (Enterobacter sakazakii).